Here is a 141-residue protein sequence, read N- to C-terminus: Transcriptional regulator MraZ (141 aa).

SpoVT-AbrB domains are found at residues 5 to 47 (TFNL…KPAD) and 76 to 119 (ANLV…DKVQ).

This sequence belongs to the MraZ family. In terms of assembly, forms oligomers.

It is found in the cytoplasm. Its subcellular location is the nucleoid. The chain is Transcriptional regulator MraZ from Mycoplasma genitalium (strain ATCC 33530 / DSM 19775 / NCTC 10195 / G37) (Mycoplasmoides genitalium).